The chain runs to 397 residues: Putative gustatory receptor 93c (397 aa).

Residues 1–12 (MIERLKKVSLPA) lie on the Cytoplasmic side of the membrane. The helical transmembrane segment at 13–33 (LSAFILFCSCHYGRILGVICF) threads the bilayer. At 34-87 (DIGQRTSDDSLVVRNRHQFKWFCLSCRLISVTAVCCFCAPYVADIEDPYERLLQ) the chain is on the extracellular side. The chain crosses the membrane as a helical span at residues 88–108 (CFRLSASLICGICIIVVQVCY). At 109–141 (EKELLRMIISFLRLFRRVRRLSSLKRIGFGGKR) the chain is on the cytoplasmic side. A helical transmembrane segment spans residues 142–162 (EFFLLLFKFICLVYELYSEIC). The Extracellular portion of the chain corresponds to 163–179 (QLWHLPDSLSLFATLCE). A helical membrane pass occupies residues 180 to 200 (IFLEIGSLMIIHIGFVGYLSV). Topologically, residues 201-266 (AALYSEVNSF…RTFHRLLELP (66 aa)) are cytoplasmic. Residues 267-287 (VLIILLGKIFATTILSYEVII) form a helical membrane-spanning segment. At 288–295 (RPELYARK) the chain is on the extracellular side. The chain crosses the membrane as a helical span at residues 296 to 316 (IGMWGLVVKSFADVILLTLAV). Topologically, residues 317 to 371 (HEAVSSSRMMRRLSLENFPITDHKAWHMKWEMFLSRLNFFEFRVRPLGLFEVSNE) are cytoplasmic. Residues 372–392 (VILLFLSSMITYFTYVVQYGI) form a helical membrane-spanning segment. Residues 393-397 (QTNRL) lie on the Extracellular side of the membrane.

The protein belongs to the insect chemoreceptor superfamily. Gustatory receptor (GR) family. Gr93a subfamily. In larvae, is expressed in neurons of the posterior pharyngeal sense organ.

The protein localises to the cell membrane. In terms of biological role, probable gustatory receptor which mediates acceptance or avoidance behavior, depending on its substrates. This Drosophila melanogaster (Fruit fly) protein is Putative gustatory receptor 93c (Gr93c).